An 876-amino-acid chain; its full sequence is AP-5 complex subunit beta-1 (876 aa).

In terms of assembly, probably part of the adaptor protein complex 5 (AP-5), a tetramer composed of AP5B1, AP5M1, AP5S1 and AP5Z1. Interacts with ZFYVE26 and SPG11.

Functionally, as part of AP-5, a probable fifth adaptor protein complex, it may be involved in endosomal transport. This is AP-5 complex subunit beta-1 (Ap5b1) from Rattus norvegicus (Rat).